A 335-amino-acid chain; its full sequence is UPF0353 protein Mjls_2492 (335 aa).

A run of 2 helical transmembrane segments spans residues 18 to 38 (WFFLFLIVVLALAGLYVIVAL) and 67 to 87 (LPAILLVASLVLLTVAMAGPT). The VWFA domain maps to 98-294 (VVMLVIDVSQ…EQLREVYANL (197 aa)). A helical membrane pass occupies residues 309–329 (VGWLRLGALVLALSALAALLL).

Belongs to the UPF0353 family.

It is found in the cell membrane. The protein is UPF0353 protein Mjls_2492 of Mycobacterium sp. (strain JLS).